Here is a 944-residue protein sequence, read N- to C-terminus: UvrABC system protein A (944 aa).

An ATP-binding site is contributed by glycine 33–serine 40. The C4-type zinc-finger motif lies at cysteine 252–cysteine 279. 2 consecutive ABC transporter domains span residues tryptophan 309–leucine 587 and isoleucine 607–lysine 935. ATP is bound at residue glycine 639–serine 646. The C4-type zinc finger occupies cysteine 738–cysteine 764.

Belongs to the ABC transporter superfamily. UvrA family. Forms a heterotetramer with UvrB during the search for lesions.

It is found in the cytoplasm. The UvrABC repair system catalyzes the recognition and processing of DNA lesions. UvrA is an ATPase and a DNA-binding protein. A damage recognition complex composed of 2 UvrA and 2 UvrB subunits scans DNA for abnormalities. When the presence of a lesion has been verified by UvrB, the UvrA molecules dissociate. The polypeptide is UvrABC system protein A (Staphylococcus epidermidis (strain ATCC 12228 / FDA PCI 1200)).